The following is an 88-amino-acid chain: Phosphocarrier protein HPr (88 aa).

Residues 1–88 (MAEKTFKVVS…DTLAKEGLAE (88 aa)) form the HPr domain. Residue Ser12 is modified to Phosphoserine. His15 acts as the Pros-phosphohistidine intermediate in catalysis. At Ser46 the chain carries Phosphoserine; by HPrK/P.

The protein belongs to the HPr family.

It is found in the cytoplasm. Phosphorylation on Ser-46 inhibits the phosphoryl transfer from enzyme I to HPr. In terms of biological role, general (non sugar-specific) component of the phosphoenolpyruvate-dependent sugar phosphotransferase system (sugar PTS). This major carbohydrate active-transport system catalyzes the phosphorylation of incoming sugar substrates concomitantly with their translocation across the cell membrane. The phosphoryl group from phosphoenolpyruvate (PEP) is transferred to the phosphoryl carrier protein HPr by enzyme I. Phospho-HPr then transfers it to the PTS EIIA domain. P-Ser-HPr interacts with the catabolite control protein A (CcpA), forming a complex that binds to DNA at the catabolite response elements cre, operator sites preceding a large number of catabolite-regulated genes. Thus, P-Ser-HPr is a corepressor in carbon catabolite repression (CCR), a mechanism that allows bacteria to coordinate and optimize the utilization of available carbon sources. P-Ser-HPr also plays a role in inducer exclusion, in which it probably interacts with several non-PTS permeases and inhibits their transport activity. The polypeptide is Phosphocarrier protein HPr (ptsH) (Geobacillus stearothermophilus (Bacillus stearothermophilus)).